A 798-amino-acid chain; its full sequence is Integrin beta-5 (798 aa).

The signal sequence occupies residues 1-23; sequence MPRVPATLYACLLGLCALVPRLA. Over 24–719 the chain is Extracellular; sequence GLNICTSGSA…REPECGSAPN (696 aa). Residues 27 to 76 form the PSI domain; it reads ICTSGSATSCEECLLIHPKCAWCSKEYFGNPRSITSRCDLKANLIRNGCE. 19 disulfides stabilise this stretch: C28-C46, C36-C463, C39-C64, C49-C75, C202-C211, C259-C300, C401-C413, C433-C461, C465-C484, C476-C487, C489-C498, C500-C530, C513-C528, C522-C533, C535-C548, C550-C571, C555-C569, C563-C574, and C576-C585. The 243-residue stretch at 136-378 folds into the VWFA domain; it reads YPVDLYYLMD…QLIINAYSSI (243 aa). 2 residues coordinate Mg(2+): S147 and S149. Ca(2+)-binding residues include S149, D152, D153, and D184. N242, D244, P246, and E247 together coordinate Ca(2+). A Mg(2+)-binding site is contributed by E247. N-linked (GlcNAc...) asparagine glycosylation occurs at N347. G362 lines the Ca(2+) pocket. N-linked (GlcNAc...) asparagine glycosylation is found at N460 and N479. I-EGF domains lie at 465 to 499, 500 to 549, 550 to 586, and 587 to 626; these read CSTG…TRCE, CQEG…PFCE, CDSF…DNCN, and CSTD…ETCE. N505 is a glycosylation site (N-linked (GlcNAc...) asparagine). N-linked (GlcNAc...) asparagine glycosylation occurs at N586. 9 disulfide bridges follow: C587/C610, C594/C608, C602/C613, C615/C625, C628/C631, C635/C682, C641/C661, C644/C657, and C690/C714. N-linked (GlcNAc...) asparagine glycans are attached at residues N654 and N705. A helical transmembrane segment spans residues 720-742; the sequence is AMTILLAVVGSILLIGMALLAIW. The Cytoplasmic portion of the chain corresponds to 743–798; sequence KLLVTIHDRREFAKFQSERSRARYEMASNPLYRKPISTHTVDFAFNKFNKSYNGSV. A Phosphoserine modification is found at S770.

The protein belongs to the integrin beta chain family. In terms of assembly, heterodimer of an alpha and a beta subunit. Beta-5 (ITGB5) associates with alpha-V (ITGAV). Interacts with MYO10. Interacts with DAB2. Integrin ITGAV:ITGB5 interacts with FBLN5 (via N-terminus). ITGAV:ITGB5 interacts with CCN3. Interacts with tensin TNS3; TNS3 also interacts with PEAK1, thus acting as an adapter molecule to bridge the association of PEAK1 with ITGB5.

It localises to the cell membrane. Its function is as follows. Integrin alpha-V/beta-5 (ITGAV:ITGB5) is a receptor for fibronectin. It recognizes the sequence R-G-D in its ligand. The chain is Integrin beta-5 (Itgb5) from Mus musculus (Mouse).